The following is a 188-amino-acid chain: Translation machinery-associated protein 22 (188 aa).

In terms of domain architecture, SUI1 spans 96–167 (VVIKRIERSK…GVEELITQML (72 aa)).

This sequence belongs to the DENR family. As to quaternary structure, interacts with the 40S ribosomal subunit.

The protein resides in the cytoplasm. The sequence is that of Translation machinery-associated protein 22 (TMA22) from Yarrowia lipolytica (strain CLIB 122 / E 150) (Yeast).